Here is a 174-residue protein sequence, read N- to C-terminus: Inosine/xanthosine triphosphatase (174 aa).

A Mg(2+)-binding site is contributed by Asp-68. Residue Asp-68–Ala-69 participates in substrate binding.

The protein belongs to the YjjX NTPase family. As to quaternary structure, homodimer. Mg(2+) is required as a cofactor. The cofactor is Mn(2+).

It carries out the reaction XTP + H2O = XDP + phosphate + H(+). It catalyses the reaction ITP + H2O = IDP + phosphate + H(+). In terms of biological role, phosphatase that hydrolyzes non-canonical purine nucleotides such as XTP and ITP to their respective diphosphate derivatives. Probably excludes non-canonical purines from DNA/RNA precursor pool, thus preventing their incorporation into DNA/RNA and avoiding chromosomal lesions. This is Inosine/xanthosine triphosphatase from Photobacterium profundum (strain SS9).